We begin with the raw amino-acid sequence, 205 residues long: Rho-related GTP-binding protein RhoQ (205 aa).

A GTP-binding site is contributed by 16–23; sequence GDGAVGKT. The Effector region signature appears at 38-46; sequence YVPTVFDHY. Residues 63–67 and 121–124 each bind GTP; these read DTAGQ and TQID. Residue C202 is modified to Cysteine methyl ester. C202 carries S-farnesyl cysteine lipidation. Residues 203–205 constitute a propeptide, removed in mature form; that stretch reads LIT.

The protein belongs to the small GTPase superfamily. Rho family. As to quaternary structure, interacts with EXO70, CDC42EP1, CDC42EP2 and CDC42EP3 in a GTP-dependent manner. Interacts with CDC42EP4, PARD6A, PARD6G (and probably PARD6B) in a GTP-dependent manner. Part of a quaternary complex containing PARD3, some PARD6 protein (PARD6A, PARD6B or PARD6G) and some atypical PKC protein (PRKCI or PRKCZ). Interacts with GOPC. Interacts with ARHGAP33/TCGAP. Post-translationally, may be post-translationally modified by both palmitoylation and polyisoprenylation.

The protein localises to the cytoplasm. Its subcellular location is the cell membrane. With respect to regulation, regulated by guanine nucleotide exchange factors (GEFs) which promote the exchange of bound GDP for free GTP, GTPase activating proteins (GAPs) which increase the GTP hydrolysis activity, and GDP dissociation inhibitors which inhibit the dissociation of the nucleotide from the GTPase. Its function is as follows. Plasma membrane-associated small GTPase which cycles between an active GTP-bound and an inactive GDP-bound state. In active state binds to a variety of effector proteins to regulate cellular responses. Involved in epithelial cell polarization processes. May play a role in CFTR trafficking to the plasma membrane. Causes the formation of thin, actin-rich surface projections called filopodia. This is Rho-related GTP-binding protein RhoQ (Rhoq) from Mus musculus (Mouse).